A 283-amino-acid chain; its full sequence is Circadian clock oscillator protein KaiA (283 aa).

The psR domain, binds oxidized quinones stretch occupies residues 3–133 (QSTALTICGL…VKLCPGCAVP (131 aa)). The KaiA N-terminal domain occupies 3–163 (QSTALTICGL…RLSQKLKERL (161 aa)). The tract at residues 164–172 (GYLGVYYKR) is flexible linker. A KaiA C-terminal domain is found at 173 to 281 (DTAFFFRRMS…CEMYRRSIPR (109 aa)).

As to quaternary structure, homodimer. The KaiABC complex composition changes during the circadian cycle to control KaiC phosphorylation. Complexes KaiC(6), KaiA(2-4):KaiC(6), KaiB(6):KaiC(6) and KaiC(6):KaiB(6):KaiA(12) are among the most important forms, many form cooperatively. KaiA and CikA bind to the same region of the KaiB(fs) form and therefore compete.

Key component of the KaiABC oscillator complex, which constitutes the main circadian regulator in cyanobacteria. Complex composition changes during the circadian cycle to control KaiC phosphorylation. KaiA stimulates KaiC autophosphorylation, while KaiB sequesters KaiA, leading to KaiC autodephosphorylation. KaiA binding to the KaiC CII domain during the subjective day yields KaiA(2-4):KaiC(6) complexes which stimulate KaiC autophosphorylation. Phospho-Ser-431 KaiC accumulation triggers binding of KaiB during the subjective night to form the KaiB(6):KaiC(6) complex, leading to changes in the output regulators CikA and SasA. KaiB(6):KaiC(6) formation exposes a site for KaiA binding on KaiB that sequesters KaiA from KaiC's CII domain, making the KaiC(6):KaiB(6):KaiA(12) complex resulting in KaiC autodephosphorylation. Complete dephosphorylation of KaiC leads to dissociation of KaiA(2):KaiB(1), completing 1 cycle of the Kai oscillator. In terms of biological role, binds oxidized quinones via the N-terminal PsR domain, allowing it to sense redox changes and possibly mediate clock input. This is Circadian clock oscillator protein KaiA from Thermostichus vulcanus (Synechococcus vulcanus).